Reading from the N-terminus, the 1016-residue chain is EMILIN-1 (1016 aa).

The N-terminal stretch at 1–21 (MAPRTLWSCYLCCLLTAAAGA) is a signal peptide. The region spanning 56–131 (HRNWCAYVVT…QGYGGDDCAE (76 aa)) is the EMI domain. Intrachain disulfides connect Cys-60–Cys-121, Cys-85–Cys-92, and Cys-120–Cys-129. The tract at residues 135–182 (PALGPASSTPRPLARPARPNLSGSSAGSPLSGLGGEGPGESEKVQQLE) is disordered. Residues 139 to 165 (PASSTPRPLARPARPNLSGSSAGSPLS) show a composition bias toward low complexity. Residue Asn-154 is glycosylated (N-linked (GlcNAc...) asparagine). Residues 216–256 (TAFNGRQQPADAAARPGVHETLNEIQHQLQLLDTRVSTHDQ) adopt a coiled-coil conformation. 2 disordered regions span residues 257–288 (ELGH…GPSE) and 383–402 (RGTE…GYTS). The span at 266 to 279 (GGSSSSGGSRAPAP) shows a compositional bias: low complexity. The stretch at 356-420 (PELGRRLAEL…EDRFNSTLGP (65 aa)) forms a coiled coil. The span at 386–397 (ELGGAAGQGGHP) shows a compositional bias: gly residues. The N-linked (GlcNAc...) asparagine glycan is linked to Asn-415. The segment at 416–435 (STLGPSEEQEESWPGAPGGL) is disordered. N-linked (GlcNAc...) asparagine glycosylation is found at Asn-455 and Asn-561. A coiled-coil region spans residues 576 to 603 (AHGDEGCGACGGVQEELGRLRDGVERCS). N-linked (GlcNAc...) asparagine glycosylation occurs at Asn-658. A coiled-coil region spans residues 685 to 752 (IISEINRLQQ…GLQGLREGLS (68 aa)). N-linked (GlcNAc...) asparagine glycans are attached at residues Asn-766 and Asn-794. 2 disordered regions span residues 811-863 (DLTG…VEGA) and 942-961 (RVDS…VAES). The region spanning 814–864 (GPAGEAGPPGPPGLQGPPGPAGPPGSPGKDGQEGPIGPPGPQGEQGVEGAP) is the Collagen-like domain. Residues 821-839 (PPGPPGLQGPPGPAGPPGS) are compositionally biased toward pro residues. Residues 835 to 857 (GPPGSPGKDGQEGPIGPPGPQGE) adopt a coiled-coil conformation. The 148-residue stretch at 866–1013 (APVPQVAFSA…GALLYGDPEL (148 aa)) folds into the C1q domain.

In terms of assembly, homotrimer associated through a moderately stable interaction of the C-terminal globular C1q domains, allowing the nucleation of the triple helix and then a further quaternary assembly to higher-order polymers via intermolecular disulfide bonds. Interacts with EMILIN2. Interacts with EFEMP2; this interaction promotes the incorporation of EFEMP2 into the extracellular matrix. In terms of tissue distribution, distributed in tissues where resilience and elastic recoil are prominent. Highest levels in the adult small intestine, aorta, lung, uterus, and appendix and in the fetal spleen, kidney, lung, and heart; intermediate expression was detected in adult liver, ovary, colon, stomach, lymph node and spleen; adult heart, bladder, prostate, adrenal gland, mammary gland, placenta and kidney showed low expression whereas a series of other adult tissues, including skeletal muscle and different regions of adult brain show no expression. Detected in intramuscular nerve bundles, where it particularly localizes in the epineurium, the most external layer of dense connective tissue enclosing the nerve.

It localises to the secreted. The protein localises to the extracellular space. It is found in the extracellular matrix. Involved in elastic and collagen fibers formation. It is required for EFEMP2 deposition into the extracellular matrix, and collagen network assembly and cross-linking via protein-lysine 6-oxidase/LOX activity. May be responsible for anchoring smooth muscle cells to elastic fibers, and may be involved in the processes that regulate vessel assembly. Has cell adhesive capacity. The chain is EMILIN-1 (EMILIN1) from Homo sapiens (Human).